A 204-amino-acid chain; its full sequence is UPF0134 protein MPN_655 (204 aa).

The tract at residues 46 to 132 is disordered; sequence EVENKPKIPI…FNEFKDSNNQ (87 aa). Positions 64-80 are enriched in pro residues; the sequence is SPKPLKPPKPPKPPKGP. The segment covering 117–132 has biased composition (basic and acidic residues); the sequence is YVTRKEFNEFKDSNNQ.

The protein belongs to the UPF0134 family.

The protein is UPF0134 protein MPN_655 of Mycoplasma pneumoniae (strain ATCC 29342 / M129 / Subtype 1) (Mycoplasmoides pneumoniae).